A 416-amino-acid polypeptide reads, in one-letter code: Formyl-CoA:oxalate CoA-transferase (416 aa).

CoA-binding positions include 17-18 (QS), Arg38, 72-75 (LNTK), 96-98 (NFH), His104, and 137-140 (KAYE). Residue Asp169 is the Nucleophile of the active site. 248–250 (GGQ) serves as a coordination point for substrate. 273-275 (QEQ) is a binding site for CoA.

Belongs to the CoA-transferase III family. Frc subfamily. Homodimer.

It catalyses the reaction formyl-CoA + oxalate = oxalyl-CoA + formate. The protein operates within metabolic intermediate degradation; oxalate degradation; CO(2) and formate from oxalate: step 1/2. Functionally, involved in the catabolism of oxalate and in the adapatation to low pH via the induction of the oxalate-dependent acid tolerance response (ATR). Catalyzes the transfer of the CoA moiety from formyl-CoA to oxalate. The protein is Formyl-CoA:oxalate CoA-transferase of Escherichia coli O6:H1 (strain CFT073 / ATCC 700928 / UPEC).